The sequence spans 352 residues: Rhodopsin (352 aa).

At 1 to 36 the chain is on the extracellular side; the sequence is MNGTEGPFFYIPMVNTTGIVRSPYEYPQYYLVNPAA. 2 N-linked (GlcNAc...) asparagine glycosylation sites follow: Asn-2 and Asn-15. The helical transmembrane segment at 37-61 threads the bilayer; sequence YACLGAYMFFLILVGFPVNFLTLYV. Topologically, residues 62 to 73 are cytoplasmic; that stretch reads TLEHKKLRTPLN. A helical membrane pass occupies residues 74 to 96; it reads YILLNLAVADLFMVFGGFTTTMY. The Extracellular segment spans residues 97–110; the sequence is TSMHGYFVLGRLGC. A disulfide bridge connects residues Cys-110 and Cys-187. The helical transmembrane segment at 111–133 threads the bilayer; sequence NIEGFFATLGGEIALWSLVVLAI. The 'Ionic lock' involved in activated form stabilization motif lies at 134 to 136; that stretch reads ERW. Residues 134 to 152 lie on the Cytoplasmic side of the membrane; that stretch reads ERWVVVCKPISNFRFGENH. Residues 153–173 form a helical membrane-spanning segment; it reads AIMGVAFTWFMASACAVPPLV. The Extracellular portion of the chain corresponds to 174–202; the sequence is GWSRYIPEGMQCSCGVDYYTRAEGFNNES. N-linked (GlcNAc...) asparagine glycosylation is present at Asn-200. Residues 203–224 traverse the membrane as a helical segment; the sequence is FVIYMFIVHFCIPLAVVGFCYG. Over 225-252 the chain is Cytoplasmic; sequence RLLCAVKEAAAAQQESETTQRAEREVSR. The chain crosses the membrane as a helical span at residues 253-274; the sequence is MVVIMVIGFLVCWLPYASVAWY. Residues 275–286 are Extracellular-facing; that stretch reads IFTHQGSEFGPP. Residues 287 to 308 traverse the membrane as a helical segment; that stretch reads FMTVPAFFAKSSSIYNPMIYIC. Lys-296 carries the N6-(retinylidene)lysine modification. Residues 309–352 lie on the Cytoplasmic side of the membrane; sequence MNKQFRHCMITTLCCGKNPFEEEEGASTTKTEASSVSSSSVSPA. 2 S-palmitoyl cysteine lipidation sites follow: Cys-322 and Cys-323. Residues 331–352 form a disordered region; that stretch reads EEGASTTKTEASSVSSSSVSPA. The segment covering 342–352 has biased composition (low complexity); the sequence is SSVSSSSVSPA.

Belongs to the G-protein coupled receptor 1 family. Opsin subfamily. Post-translationally, phosphorylated on some or all of the serine and threonine residues present in the C-terminal region. Contains one covalently linked retinal chromophore.

Its subcellular location is the membrane. The protein resides in the cell projection. The protein localises to the cilium. It localises to the photoreceptor outer segment. Photoreceptor required for image-forming vision at low light intensity. While most salt water fish species use retinal as chromophore, most freshwater fish use 3-dehydroretinal, or a mixture of retinal and 3-dehydroretinal. Light-induced isomerization of 11-cis to all-trans retinal triggers a conformational change that activates signaling via G-proteins. Subsequent receptor phosphorylation mediates displacement of the bound G-protein alpha subunit by arrestin and terminates signaling. This Zosterisessor ophiocephalus (Grass goby) protein is Rhodopsin (rho).